Consider the following 252-residue polypeptide: Cell division protein ZapD (252 aa).

The protein belongs to the ZapD family. As to quaternary structure, interacts with FtsZ.

The protein resides in the cytoplasm. Functionally, cell division factor that enhances FtsZ-ring assembly. Directly interacts with FtsZ and promotes bundling of FtsZ protofilaments, with a reduction in FtsZ GTPase activity. The chain is Cell division protein ZapD from Ralstonia pickettii (strain 12J).